Consider the following 319-residue polypeptide: Ubiquinone biosynthesis protein COQ9, mitochondrial (319 aa).

A mitochondrion-targeting transit peptide spans 1–45; the sequence is MAATVAFSGVLRRAGWRLLQLRCLPVPRCRPALAPRAFRASAMQL. Positions 17–32 match the SIFI-degron motif; sequence RLLQLRCLPVPRCRPA. A disordered region spans residues 46-99; it reads RSLDQQKDQPPPSSSQQQSEAQGAEEPNPEALRSPPRYTDQGGEEEEDYESEEQ. Acidic residues predominate over residues 87 to 98; the sequence is GGEEEEDYESEE. The residue at position 176 (Lys-176) is an N6-acetyllysine. Arg-245 lines the a 1,2-diacylglycero-3-phosphoethanolamine pocket.

It belongs to the COQ9 family. In terms of assembly, homodimer. Heterodimer; two heterodimers of COQ7:COQ9 come together on the same side of the lipid pseudo-bilayer and form a curved tetramer with a hydrophobic surface suitable for membrane interaction. These two tetramers assemble into a soluble octamer with a pseudo-bilayer of lipids captured within. Interacts with COQ7; this interaction allows ubiquinone (CoQ) isoprene intermediates presentation to COQ7 and facilitates the COQ7-mediated hydroxylase step. In terms of processing, in response to mitochondrial stress, the precursor protein is ubiquitinated by the SIFI complex in the cytoplasm before mitochondrial import, leading to its degradation. Within the SIFI complex, UBR4 initiates ubiquitin chain that are further elongated or branched by KCMF1.

Its subcellular location is the mitochondrion. It participates in cofactor biosynthesis; ubiquinone biosynthesis. Its function is as follows. Membrane-associated protein that warps the membrane surface to access and bind aromatic isoprenes with high specificity, including ubiquinone (CoQ) isoprene intermediates and presents them directly to COQ7, therefore facilitating the COQ7-mediated hydroxylase step. Participates in the biosynthesis of coenzyme Q, also named ubiquinone, an essential lipid-soluble electron transporter for aerobic cellular respiration. The sequence is that of Ubiquinone biosynthesis protein COQ9, mitochondrial from Bos taurus (Bovine).